Here is a 257-residue protein sequence, read N- to C-terminus: Pimeloyl-[acyl-carrier protein] methyl ester esterase (257 aa).

Residues 15–241 form the AB hydrolase-1 domain; that stretch reads HLVLLHGWGL…KAAHAPFVSH (227 aa). Residues tryptophan 22, 82–83, and 143–147 each bind substrate; these read SL and FLALQ. Serine 82 functions as the Nucleophile in the catalytic mechanism. Residues aspartate 207 and histidine 235 contribute to the active site. Histidine 235 is a substrate binding site.

The protein belongs to the AB hydrolase superfamily. Carboxylesterase BioH family. Monomer.

The protein localises to the cytoplasm. The enzyme catalyses 6-carboxyhexanoyl-[ACP] methyl ester + H2O = 6-carboxyhexanoyl-[ACP] + methanol + H(+). Its pathway is cofactor biosynthesis; biotin biosynthesis. The physiological role of BioH is to remove the methyl group introduced by BioC when the pimeloyl moiety is complete. It allows to synthesize pimeloyl-ACP via the fatty acid synthetic pathway through the hydrolysis of the ester bonds of pimeloyl-ACP esters. This chain is Pimeloyl-[acyl-carrier protein] methyl ester esterase, found in Klebsiella pneumoniae subsp. pneumoniae (strain ATCC 700721 / MGH 78578).